Consider the following 161-residue polypeptide: RNA pyrophosphohydrolase (161 aa).

In terms of domain architecture, Nudix hydrolase spans G6–V149. The short motif at G38–G59 is the Nudix box element.

It belongs to the Nudix hydrolase family. RppH subfamily. A divalent metal cation is required as a cofactor.

Functionally, accelerates the degradation of transcripts by removing pyrophosphate from the 5'-end of triphosphorylated RNA, leading to a more labile monophosphorylated state that can stimulate subsequent ribonuclease cleavage. The polypeptide is RNA pyrophosphohydrolase (Acinetobacter baumannii (strain AB307-0294)).